A 268-amino-acid chain; its full sequence is Malonyl-[acyl-carrier protein] O-methyltransferase (268 aa).

Belongs to the methyltransferase superfamily.

The catalysed reaction is malonyl-[ACP] + S-adenosyl-L-methionine = malonyl-[ACP] methyl ester + S-adenosyl-L-homocysteine. Its pathway is cofactor biosynthesis; biotin biosynthesis. Its function is as follows. Converts the free carboxyl group of a malonyl-thioester to its methyl ester by transfer of a methyl group from S-adenosyl-L-methionine (SAM). It allows to synthesize pimeloyl-ACP via the fatty acid synthetic pathway. The chain is Malonyl-[acyl-carrier protein] O-methyltransferase from Prosthecochloris aestuarii (strain DSM 271 / SK 413).